A 158-amino-acid polypeptide reads, in one-letter code: Transcription factor HY5 (158 aa).

Positions 1–25 are enriched in low complexity; the sequence is MQEQATSSIAASSLPSSSERSSSSA. A disordered region spans residues 1 to 105; that stretch reads MQEQATSSIA…NRVSAQQARE (105 aa). Over residues 26 to 44 the composition is skewed to basic and acidic residues; sequence LHHELKEGMESDDEIRRVP. Positions 35–46 are interaction with COP1; that stretch reads ESDDEIRRVPEM. A compositionally biased stretch (low complexity) spans 47-58; that stretch reads GGEATGTTSASG. Residues 86 to 149 form the bZIP domain; it reads ENKRLKRLLR…QMLRHILKNT (64 aa). Positions 88–108 are basic motif; the sequence is KRLKRLLRNRVSAQQARERKK. The leucine-zipper stretch occupies residues 114–142; it reads LEARVKELETKNAELEERLSTLQNENQML.

Belongs to the bZIP family. Interacts with COP1. In terms of processing, ubiquitinated by COP1. Ubiquitination takes place in darkness and leads to its subsequent degradation, thereby preventing to activate photomorphogenesis signals.

It is found in the nucleus. Functionally, transcription factor that promotes photomorphogenesis in the light and positively regulates fruit pigmentation and fruit nutritional quality. Probably acts downstream of the light receptor network and directly affects transcription of light-induced genes. The polypeptide is Transcription factor HY5 (HY5) (Solanum lycopersicum (Tomato)).